The sequence spans 249 residues: Putative TrmH family tRNA/rRNA methyltransferase (249 aa).

S-adenosyl-L-methionine-binding residues include Gly-196, Ile-216, and Leu-225.

This sequence belongs to the class IV-like SAM-binding methyltransferase superfamily. RNA methyltransferase TrmH family.

The chain is Putative TrmH family tRNA/rRNA methyltransferase from Staphylococcus saprophyticus subsp. saprophyticus (strain ATCC 15305 / DSM 20229 / NCIMB 8711 / NCTC 7292 / S-41).